The sequence spans 164 residues: Ribosome maturation factor RimM (164 aa).

Positions 90 to 161 (KGSYFIADLI…TVTIKPLEIW (72 aa)) constitute a PRC barrel domain.

The protein belongs to the RimM family. As to quaternary structure, binds ribosomal protein uS19.

It localises to the cytoplasm. Its function is as follows. An accessory protein needed during the final step in the assembly of 30S ribosomal subunit, possibly for assembly of the head region. Essential for efficient processing of 16S rRNA. May be needed both before and after RbfA during the maturation of 16S rRNA. It has affinity for free ribosomal 30S subunits but not for 70S ribosomes. This is Ribosome maturation factor RimM from Clostridium botulinum (strain ATCC 19397 / Type A).